The primary structure comprises 547 residues: Methionine--tRNA ligase (547 aa).

The 'HIGH' region signature appears at 13–23; the sequence is PYANGPLHIGH. 4 residues coordinate Zn(2+): cysteine 145, cysteine 148, cysteine 158, and cysteine 161. Positions 334 to 338 match the 'KMSKS' region motif; sequence QFSKS. Lysine 337 is a binding site for ATP.

This sequence belongs to the class-I aminoacyl-tRNA synthetase family. MetG type 1 subfamily. Zn(2+) serves as cofactor.

It localises to the cytoplasm. It carries out the reaction tRNA(Met) + L-methionine + ATP = L-methionyl-tRNA(Met) + AMP + diphosphate. Functionally, is required not only for elongation of protein synthesis but also for the initiation of all mRNA translation through initiator tRNA(fMet) aminoacylation. The protein is Methionine--tRNA ligase of Thermoplasma acidophilum (strain ATCC 25905 / DSM 1728 / JCM 9062 / NBRC 15155 / AMRC-C165).